The chain runs to 109 residues: Phosphoribosyl-ATP pyrophosphatase (109 aa).

The protein belongs to the PRA-PH family.

The protein localises to the cytoplasm. It carries out the reaction 1-(5-phospho-beta-D-ribosyl)-ATP + H2O = 1-(5-phospho-beta-D-ribosyl)-5'-AMP + diphosphate + H(+). Its pathway is amino-acid biosynthesis; L-histidine biosynthesis; L-histidine from 5-phospho-alpha-D-ribose 1-diphosphate: step 2/9. This Alkalilimnicola ehrlichii (strain ATCC BAA-1101 / DSM 17681 / MLHE-1) protein is Phosphoribosyl-ATP pyrophosphatase.